We begin with the raw amino-acid sequence, 102 residues long: Movement protein (102 aa).

A helical transmembrane segment spans residues 43–63 (VVALIVILFAVGIVYLAYTLF). Residues 82 to 102 (IGFGNTPLRRPGEGNPNGGPV) are disordered.

The protein belongs to the mastrevirus movement protein family. As to quaternary structure, interacts with the capsid protein (CP). Part of a MP-CP-viral DNA complex.

The protein localises to the host membrane. In terms of biological role, involved in the viral transport within, and between cells. The chain is Movement protein from Tobacco yellow dwarf virus (strain Australia) (TYDV).